We begin with the raw amino-acid sequence, 616 residues long: Dihydroxy-acid dehydratase (616 aa).

Asp81 is a binding site for Mg(2+). Cys122 serves as a coordination point for [2Fe-2S] cluster. Mg(2+) is bound by residues Asp123 and Lys124. Lys124 carries the N6-carboxylysine modification. Cys195 is a binding site for [2Fe-2S] cluster. Glu491 contacts Mg(2+). Residue Ser517 is the Proton acceptor of the active site.

It belongs to the IlvD/Edd family. In terms of assembly, homodimer. [2Fe-2S] cluster serves as cofactor. Mg(2+) is required as a cofactor.

The enzyme catalyses (2R)-2,3-dihydroxy-3-methylbutanoate = 3-methyl-2-oxobutanoate + H2O. It catalyses the reaction (2R,3R)-2,3-dihydroxy-3-methylpentanoate = (S)-3-methyl-2-oxopentanoate + H2O. It participates in amino-acid biosynthesis; L-isoleucine biosynthesis; L-isoleucine from 2-oxobutanoate: step 3/4. It functions in the pathway amino-acid biosynthesis; L-valine biosynthesis; L-valine from pyruvate: step 3/4. Its function is as follows. Functions in the biosynthesis of branched-chain amino acids. Catalyzes the dehydration of (2R,3R)-2,3-dihydroxy-3-methylpentanoate (2,3-dihydroxy-3-methylvalerate) into 2-oxo-3-methylpentanoate (2-oxo-3-methylvalerate) and of (2R)-2,3-dihydroxy-3-methylbutanoate (2,3-dihydroxyisovalerate) into 2-oxo-3-methylbutanoate (2-oxoisovalerate), the penultimate precursor to L-isoleucine and L-valine, respectively. This chain is Dihydroxy-acid dehydratase, found in Salmonella schwarzengrund (strain CVM19633).